The primary structure comprises 248 residues: ATP synthase subunit a, chloroplastic (248 aa).

Transmembrane regions (helical) follow at residues 37-57 (AQVL…SIVA), 96-116 (VPFI…GALF), 135-155 (INTT…AGLH), 200-220 (LVVA…MMFL), and 221-241 (GLFT…AYIG).

This sequence belongs to the ATPase A chain family. As to quaternary structure, F-type ATPases have 2 components, CF(1) - the catalytic core - and CF(0) - the membrane proton channel. CF(1) has five subunits: alpha(3), beta(3), gamma(1), delta(1), epsilon(1). CF(0) has four main subunits: a, b, b' and c.

The protein resides in the plastid. Its subcellular location is the chloroplast thylakoid membrane. In terms of biological role, key component of the proton channel; it plays a direct role in the translocation of protons across the membrane. This Angiopteris evecta (Mule's foot fern) protein is ATP synthase subunit a, chloroplastic.